Consider the following 387-residue polypeptide: MENVVIVDAVRTPMGRSKGGAFRQVRAEDLSAHLMRAVLSRNPSLDAAEIDDIYWGCVQQTLEQGFNIARNASLLAEIPHSVPAVTVNRLCGSSMQALHDAARAIMVGDAHVSLIGGVEHMGHVPMNHGVDFHPGLSRSVAKAAGMMGLTAEMLAKMHNISRQMQDEFAARSHQRAHAATLAGYFKNEIIPTTGHDADGVLTRYDFDEVIRPETTVASLAALRPAFDPVNGTVTAGTSSALSDGASAMLLMSESRAKALGLKARARIRSMAVVGCDPSIMGYGPVPASKLALKRAGLSVQDIDLFELNEAFAAQSLPCIKDLGLLDSIDDKINLNGGAIALGHPLGCSGSRISTTLLNNMERRDVQFGLATMCIGLGQGIATVFERV.

The active-site Acyl-thioester intermediate is the Cys91. Residues His343 and Cys373 each act as proton acceptor in the active site.

It belongs to the thiolase-like superfamily. Thiolase family. In terms of assembly, heterotetramer of two alpha chains (FadB) and two beta chains (FadA).

The protein resides in the cytoplasm. It carries out the reaction an acyl-CoA + acetyl-CoA = a 3-oxoacyl-CoA + CoA. Its pathway is lipid metabolism; fatty acid beta-oxidation. Catalyzes the final step of fatty acid oxidation in which acetyl-CoA is released and the CoA ester of a fatty acid two carbons shorter is formed. In Serratia proteamaculans (strain 568), this protein is 3-ketoacyl-CoA thiolase.